The chain runs to 979 residues: Glycine dehydrogenase (decarboxylating) (979 aa).

Lys-726 is subject to N6-(pyridoxal phosphate)lysine.

This sequence belongs to the GcvP family. In terms of assembly, the glycine cleavage system is composed of four proteins: P, T, L and H. Pyridoxal 5'-phosphate is required as a cofactor.

It carries out the reaction N(6)-[(R)-lipoyl]-L-lysyl-[glycine-cleavage complex H protein] + glycine + H(+) = N(6)-[(R)-S(8)-aminomethyldihydrolipoyl]-L-lysyl-[glycine-cleavage complex H protein] + CO2. In terms of biological role, the glycine cleavage system catalyzes the degradation of glycine. The P protein binds the alpha-amino group of glycine through its pyridoxal phosphate cofactor; CO(2) is released and the remaining methylamine moiety is then transferred to the lipoamide cofactor of the H protein. This chain is Glycine dehydrogenase (decarboxylating), found in Ralstonia pickettii (strain 12J).